The chain runs to 539 residues: Monocarboxylate transporter 8 (539 aa).

The tract at residues 1 to 92 (MALQSQASEE…VETRGTARGF (92 aa)) is disordered. Alanine 2 carries the post-translational modification N-acetylalanine. The Cytoplasmic segment spans residues 2–96 (ALQSQASEEA…GTARGFQPPE (95 aa)). The segment covering 31–41 (PESEPEPEPEP) has biased composition (acidic residues). The span at 42-64 (EPVPVPPPEPQPEPQPLPDPAPL) shows a compositional bias: pro residues. Residues 97–117 (GGFGWVVVFAATWCNGSIFGI) form a helical membrane-spanning segment. Residues 118–143 (HNSVGILYSMLLEEEKEKNRQVEFQA) lie on the Extracellular side of the membrane. Residues 144 to 164 (AWVGALAMGMIFFCSPIVSIF) form a helical membrane-spanning segment. Over 165–171 (TDRLGCR) the chain is Cytoplasmic. Residues 172 to 192 (ITATAGAAVAFIGLHTSSFTS) traverse the membrane as a helical segment. Residues 193–200 (SLSLRYFT) are Extracellular-facing. Residues 201-221 (YGILFGCGCSFAFQPSLVILG) form a helical membrane-spanning segment. The Cytoplasmic segment spans residues 222–229 (HYFQRRLG). Residues 230–250 (LANGVVSAGSSIFSMSFPFLI) form a helical membrane-spanning segment. Topologically, residues 251 to 258 (RMLGDKIK) are extracellular. The chain crosses the membrane as a helical span at residues 259 to 279 (LAQTFQVLSTFMFVLMLLSLT). The Cytoplasmic segment spans residues 280-322 (YRPLLPSSQDTPSKRGVRTLHQRFLAQLRKYFNMRVFRQRTYR). A helical membrane pass occupies residues 323–343 (IWAFGIAAAALGYFVPYVHLM). At 344–356 (KYVEEEFSEIKET) the chain is on the extracellular side. The helical transmembrane segment at 357-377 (WVLLVCIGATSGLGRLVSGHI) threads the bilayer. Topologically, residues 378-386 (SDSIPGLKK) are cytoplasmic. A helical transmembrane segment spans residues 387-407 (IYLQVLSFLLLGLMSMMIPLC). At 408-409 (RD) the chain is on the extracellular side. A helical transmembrane segment spans residues 410–430 (FGGLIVVCLFLGLCDGFFITI). At 431 to 447 (MAPIAFELVGPMQASQA) the chain is on the cytoplasmic side. The helical transmembrane segment at 448-468 (IGYLLGMMALPMIAGPPIAGL) threads the bilayer. The Extracellular portion of the chain corresponds to 469–477 (LRNCFGDYH). The chain crosses the membrane as a helical span at residues 478–498 (VAFYFAGVPPIIGAVILFFVP). At 499-539 (LMHQRMFKKEQRDSSKDKMLAPDPDPNGELLPGSPNPEEPI) the chain is on the cytoplasmic side. Residues 508-518 (EQRDSSKDKML) are compositionally biased toward basic and acidic residues. The segment at 508–539 (EQRDSSKDKMLAPDPDPNGELLPGSPNPEEPI) is disordered.

This sequence belongs to the major facilitator superfamily. Monocarboxylate porter (TC 2.A.1.13) family. In terms of assembly, monomer. Homodimer. Homooligomer. Highly expressed in liver and heart. In adult brain tissue expression is largely confined to endothelial cells of the blood-brain barrier (at protein level).

Its subcellular location is the cell membrane. The protein localises to the apical cell membrane. It catalyses the reaction 3,3',5-triiodo-L-thyronine(out) = 3,3',5-triiodo-L-thyronine(in). It carries out the reaction L-thyroxine(out) = L-thyroxine(in). The catalysed reaction is 3,3',5'-triiodo-L-thyronine(out) = 3,3',5'-triiodo-L-thyronine(in). The enzyme catalyses 3,3'-diiodo-L-thyronine(out) = 3,3'-diiodo-L-thyronine(in). Its function is as follows. Specific thyroid hormone transmembrane transporter, that mediates both uptake and efflux of thyroid hormones across the cell membrane independently of pH or a Na(+) gradient. Major substrates are the iodothyronines T3 and T4 and to a lesser extent rT3 and 3,3-diiodothyronine (3,3'-T2). Acts as an important mediator of thyroid hormone transport, especially T3, through the blood-brain barrier. This is Monocarboxylate transporter 8 (SLC16A2) from Homo sapiens (Human).